A 320-amino-acid polypeptide reads, in one-letter code: Pseudouridine-5'-phosphate glycosidase (320 aa).

Glu-25 functions as the Proton donor in the catalytic mechanism. 2 residues coordinate substrate: Lys-85 and Val-105. Residue Asp-137 participates in Mn(2+) binding. Position 139-141 (139-141 (SAD)) interacts with substrate. Lys-158 serves as the catalytic Nucleophile.

This sequence belongs to the pseudouridine-5'-phosphate glycosidase family. As to quaternary structure, homotrimer. The cofactor is Mn(2+).

It carries out the reaction D-ribose 5-phosphate + uracil = psi-UMP + H2O. Its function is as follows. Catalyzes the reversible cleavage of pseudouridine 5'-phosphate (PsiMP) to ribose 5-phosphate and uracil. Functions biologically in the cleavage direction, as part of a pseudouridine degradation pathway. The sequence is that of Pseudouridine-5'-phosphate glycosidase from Rhodospirillum centenum (strain ATCC 51521 / SW).